Here is a 198-residue protein sequence, read N- to C-terminus: ATP-dependent Clp protease proteolytic subunit (198 aa).

Catalysis depends on serine 103, which acts as the Nucleophile. Histidine 128 is an active-site residue.

The protein belongs to the peptidase S14 family. As to quaternary structure, fourteen ClpP subunits assemble into 2 heptameric rings which stack back to back to give a disk-like structure with a central cavity, resembling the structure of eukaryotic proteasomes.

It is found in the cytoplasm. It catalyses the reaction Hydrolysis of proteins to small peptides in the presence of ATP and magnesium. alpha-casein is the usual test substrate. In the absence of ATP, only oligopeptides shorter than five residues are hydrolyzed (such as succinyl-Leu-Tyr-|-NHMec, and Leu-Tyr-Leu-|-Tyr-Trp, in which cleavage of the -Tyr-|-Leu- and -Tyr-|-Trp bonds also occurs).. Cleaves peptides in various proteins in a process that requires ATP hydrolysis. Has a chymotrypsin-like activity. Plays a major role in the degradation of misfolded proteins. In Vesicomyosocius okutanii subsp. Calyptogena okutanii (strain HA), this protein is ATP-dependent Clp protease proteolytic subunit.